Consider the following 750-residue polypeptide: Phosphoribosylformylglycinamidine synthase subunit PurL (750 aa).

The active site involves histidine 54. ATP is bound by residues tyrosine 57 and lysine 101. Glutamate 103 is a binding site for Mg(2+). Residues 104–107 (SHNH) and arginine 126 contribute to the substrate site. Residue histidine 105 is the Proton acceptor of the active site. Aspartate 127 contacts Mg(2+). Glutamine 251 contacts substrate. Aspartate 279 serves as a coordination point for Mg(2+). Substrate is bound at residue 323–325 (ESQ). Positions 509 and 546 each coordinate ATP. Asparagine 547 provides a ligand contact to Mg(2+). Residue serine 549 participates in substrate binding.

This sequence belongs to the FGAMS family. As to quaternary structure, monomer. Part of the FGAM synthase complex composed of 1 PurL, 1 PurQ and 2 PurS subunits.

Its subcellular location is the cytoplasm. It carries out the reaction N(2)-formyl-N(1)-(5-phospho-beta-D-ribosyl)glycinamide + L-glutamine + ATP + H2O = 2-formamido-N(1)-(5-O-phospho-beta-D-ribosyl)acetamidine + L-glutamate + ADP + phosphate + H(+). Its pathway is purine metabolism; IMP biosynthesis via de novo pathway; 5-amino-1-(5-phospho-D-ribosyl)imidazole from N(2)-formyl-N(1)-(5-phospho-D-ribosyl)glycinamide: step 1/2. Part of the phosphoribosylformylglycinamidine synthase complex involved in the purines biosynthetic pathway. Catalyzes the ATP-dependent conversion of formylglycinamide ribonucleotide (FGAR) and glutamine to yield formylglycinamidine ribonucleotide (FGAM) and glutamate. The FGAM synthase complex is composed of three subunits. PurQ produces an ammonia molecule by converting glutamine to glutamate. PurL transfers the ammonia molecule to FGAR to form FGAM in an ATP-dependent manner. PurS interacts with PurQ and PurL and is thought to assist in the transfer of the ammonia molecule from PurQ to PurL. This is Phosphoribosylformylglycinamidine synthase subunit PurL from Cutibacterium acnes (strain DSM 16379 / KPA171202) (Propionibacterium acnes).